Consider the following 599-residue polypeptide: MSISSLELQIQTLPDNPGVYQYYDKDGKILYVGKAKNLKKRVSSYFNKVHDTAKTNVLVKKIVTIKHIVVPTETDALLLENNLIKTLQPRYNILLRDDKTYPWICIKKEPFSRLFPTRKMVKDGSEYFGPYTSFKTVSVILDLIKELYPLRSCNFDLSQKNIENYKFKVCLEYHIGNCKGACEGLETLENYQTQINAIREILKGNFKDSMKDFKKVMTNLAQNMHFEEAQKIKEKIEILENYQSRSTIINPKITNIDVFSIVSDEAAAFINFLQISHGSIIRSHTLEIKKKLDETDQELLELAIVELRERFQLLSREIIVPFEVEVGENIKVTVPQLGDKKQILELSVRNAKFYRIEQLKQLQIVDPERHVNRIMAQMKKDLRLSVEPRHIECFDNSNIQGTNPVAACVVFKDGKPSKKDYRHFNIKTVEGPNDFASMEEVVYRRYKRLLDENQPLPNLIIIDGGKGQLSSALKIIDELDLRGKIAIIGIAKRLEELFYPGDSIPLYLDKKSETLKIIQQLRNEAHRFGITFHRDKRSKAALNSSIETIPGIGEKTMLTLIKHFKSVKRLKLAKEKEISDLIGISKAKKITDFYSKLDN.

In terms of domain architecture, GIY-YIG spans 15-93 (DNPGVYQYYD…IKTLQPRYNI (79 aa)). A UVR domain is found at 207-242 (KDSMKDFKKVMTNLAQNMHFEEAQKIKEKIEILENY).

The protein belongs to the UvrC family. As to quaternary structure, interacts with UvrB in an incision complex.

Its subcellular location is the cytoplasm. Functionally, the UvrABC repair system catalyzes the recognition and processing of DNA lesions. UvrC both incises the 5' and 3' sides of the lesion. The N-terminal half is responsible for the 3' incision and the C-terminal half is responsible for the 5' incision. This is UvrABC system protein C from Flavobacterium psychrophilum (strain ATCC 49511 / DSM 21280 / CIP 103535 / JIP02/86).